The following is a 494-amino-acid chain: Cobyric acid synthase (494 aa).

The GATase cobBQ-type domain occupies 248–444 (EIEIAIIKLP…LHGIFENDEW (197 aa)). The active-site Nucleophile is the Cys329. His436 is an active-site residue.

It belongs to the CobB/CobQ family. CobQ subfamily.

Its pathway is cofactor biosynthesis; adenosylcobalamin biosynthesis. Its function is as follows. Catalyzes amidations at positions B, D, E, and G on adenosylcobyrinic A,C-diamide. NH(2) groups are provided by glutamine, and one molecule of ATP is hydrogenolyzed for each amidation. In Prochlorococcus marinus (strain NATL1A), this protein is Cobyric acid synthase.